A 909-amino-acid polypeptide reads, in one-letter code: SCY1-like protein 2 B (909 aa).

Residues 39–343 (YELLDQIGSA…ALDFTGSNFF (305 aa)) enclose the Protein kinase domain. HEAT repeat units lie at residues 311–348 (SIPS…SDAR), 350–382 (RALR…DFDS), 383–401 (RVLR…RNLV), 402–439 (LQPI…TASG), 465–502 (VLPL…VVRQ), 499–537 (VVRQ…TLDK), and 578–617 (FTAE…KIEE). Disordered stretches follow at residues 624–772 (NDSG…VAST) and 804–909 (SASL…LDLL). 5 stretches are compositionally biased toward polar residues: residues 638-648 (NGLQFQSSTQI), 678-712 (PASS…TAPT), 724-747 (RQSS…TSFA), 804-828 (SASL…QDPL), and 835-852 (KQSQ…NNQK).

It belongs to the protein kinase superfamily. Interacts with VTI11, VTI12 and CHC1. As to expression, expressed in roots, seedlings, leaves, stems, flowers, and, at low levels, in siliques.

It localises to the golgi apparatus membrane. The protein resides in the golgi apparatus. Its subcellular location is the trans-Golgi network membrane. The protein localises to the prevacuolar compartment membrane. In terms of biological role, probably inactive kinase. Component of the AP2-containing clathrin coat that regulates clathrin-dependent trafficking at plasma membrane, TGN and endosomal system. Together with SCYL2B, required for cell growth, plant growth and development. Essential for polarized root hair development probably by mediating the root hair tip localization of cellulose synthase-like D3 (CSLD3). This chain is SCY1-like protein 2 B, found in Arabidopsis thaliana (Mouse-ear cress).